The primary structure comprises 117 residues: Peptidyl-tRNA hydrolase (117 aa).

This sequence belongs to the PTH2 family.

It localises to the cytoplasm. The catalysed reaction is an N-acyl-L-alpha-aminoacyl-tRNA + H2O = an N-acyl-L-amino acid + a tRNA + H(+). Functionally, the natural substrate for this enzyme may be peptidyl-tRNAs which drop off the ribosome during protein synthesis. In Metallosphaera sedula (strain ATCC 51363 / DSM 5348 / JCM 9185 / NBRC 15509 / TH2), this protein is Peptidyl-tRNA hydrolase.